Reading from the N-terminus, the 850-residue chain is Protein translocase subunit SecA (850 aa).

Residues Q87, 105-109, and D494 contribute to the ATP site; that span reads GEGKT. Positions 834, 836, 845, and 846 each coordinate Zn(2+).

It belongs to the SecA family. Monomer and homodimer. Part of the essential Sec protein translocation apparatus which comprises SecA, SecYEG and auxiliary proteins SecDF-YajC and YidC. Requires Zn(2+) as cofactor.

Its subcellular location is the cell inner membrane. The protein resides in the cytoplasm. The enzyme catalyses ATP + H2O + cellular proteinSide 1 = ADP + phosphate + cellular proteinSide 2.. Its function is as follows. Part of the Sec protein translocase complex. Interacts with the SecYEG preprotein conducting channel. Has a central role in coupling the hydrolysis of ATP to the transfer of proteins into and across the cell membrane, serving as an ATP-driven molecular motor driving the stepwise translocation of polypeptide chains across the membrane. The protein is Protein translocase subunit SecA of Desulfotalea psychrophila (strain LSv54 / DSM 12343).